The primary structure comprises 312 residues: Zinc transporter ZitB (312 aa).

The next 6 helical transmembrane spans lie at Leu16–Leu36, Leu40–Leu60, Leu81–Val101, Thr117–Leu137, Leu153–Leu173, and Trp177–Trp197.

The protein belongs to the cation diffusion facilitator (CDF) transporter (TC 2.A.4) family. SLC30A subfamily.

It localises to the cell inner membrane. Functionally, involved in zinc efflux across the cytoplasmic membrane, thus reducing zinc accumulation in the cytoplasm and rendering bacteria more resistant to zinc. It may contribute to zinc homeostasis at low concentrations of zinc. The protein is Zinc transporter ZitB of Yersinia pestis.